A 403-amino-acid polypeptide reads, in one-letter code: METYAEVGKEGKPSCASVDLQGDSSLQVEISDAVSERDKVKFTVQTKSCLPHFAQTEFSVVRQHEEFIWLHDAYVENEEYAGLIIPPAPPRPDFEASREKLQKLGEGDSSVTREEFAKMKQELEAEYLAIFKKTVAMHEVFLQRLAAHPTLRRDHNFFVFLEYGQDLSVRGKNRKELLGGFLRNIVKSADEALITGMSGLKEVDDFFEHERTFLLEYHTRIRDACLRADRVMRAHKCLADDYIPISAALSSLGTQEVNQLRTSFLKLAELFERLRKLEGRVASDEDLKLSDMLRYYMRDSQAAKDLLYRRLRALADYENANKALDKARTRNREVRPAESHQQLCCQRFERLSDSAKQELMDFKSRRVSSFRKNLIELAELELKHAKASTLILRNTLVALKGEP.

The PX domain maps to 20–168; sequence LQGDSSLQVE…VFLEYGQDLS (149 aa). A coiled-coil region spans residues 258 to 335; sequence NQLRTSFLKL…KARTRNREVR (78 aa).

This sequence belongs to the sorting nexin family.

In terms of biological role, may be involved in several stages of intracellular trafficking. The chain is Sorting nexin-32 (SNX32) from Homo sapiens (Human).